The following is a 118-amino-acid chain: Large ribosomal subunit protein uL18 (118 aa).

Residues 1-24 are disordered; it reads MISKPDKNKTRQRRHARVRGKISG. Positions 10–20 are enriched in basic residues; that stretch reads TRQRRHARVRG.

Belongs to the universal ribosomal protein uL18 family. As to quaternary structure, part of the 50S ribosomal subunit; part of the 5S rRNA/L5/L18/L25 subcomplex. Contacts the 5S and 23S rRNAs.

Functionally, this is one of the proteins that bind and probably mediate the attachment of the 5S RNA into the large ribosomal subunit, where it forms part of the central protuberance. This chain is Large ribosomal subunit protein uL18, found in Lactiplantibacillus plantarum (strain ATCC BAA-793 / NCIMB 8826 / WCFS1) (Lactobacillus plantarum).